Here is a 616-residue protein sequence, read N- to C-terminus: Dihydroxy-acid dehydratase (616 aa).

Asp-81 is a Mg(2+) binding site. Residue Cys-122 coordinates [2Fe-2S] cluster. Mg(2+)-binding residues include Asp-123 and Lys-124. Lys-124 is modified (N6-carboxylysine). [2Fe-2S] cluster is bound at residue Cys-195. Residue Glu-491 coordinates Mg(2+). The active-site Proton acceptor is Ser-517.

This sequence belongs to the IlvD/Edd family. Homodimer. It depends on [2Fe-2S] cluster as a cofactor. Mg(2+) serves as cofactor.

It catalyses the reaction (2R)-2,3-dihydroxy-3-methylbutanoate = 3-methyl-2-oxobutanoate + H2O. The catalysed reaction is (2R,3R)-2,3-dihydroxy-3-methylpentanoate = (S)-3-methyl-2-oxopentanoate + H2O. The protein operates within amino-acid biosynthesis; L-isoleucine biosynthesis; L-isoleucine from 2-oxobutanoate: step 3/4. Its pathway is amino-acid biosynthesis; L-valine biosynthesis; L-valine from pyruvate: step 3/4. In terms of biological role, functions in the biosynthesis of branched-chain amino acids. Catalyzes the dehydration of (2R,3R)-2,3-dihydroxy-3-methylpentanoate (2,3-dihydroxy-3-methylvalerate) into 2-oxo-3-methylpentanoate (2-oxo-3-methylvalerate) and of (2R)-2,3-dihydroxy-3-methylbutanoate (2,3-dihydroxyisovalerate) into 2-oxo-3-methylbutanoate (2-oxoisovalerate), the penultimate precursor to L-isoleucine and L-valine, respectively. The chain is Dihydroxy-acid dehydratase from Escherichia coli O157:H7 (strain EC4115 / EHEC).